We begin with the raw amino-acid sequence, 161 residues long: 2-C-methyl-D-erythritol 2,4-cyclodiphosphate synthase (161 aa).

Residues D10 and H12 each contribute to the a divalent metal cation site. 4-CDP-2-C-methyl-D-erythritol 2-phosphate contacts are provided by residues 10-12 and 36-37; these read DVH and HS. H44 contacts a divalent metal cation. 4-CDP-2-C-methyl-D-erythritol 2-phosphate is bound by residues 58-60, 134-137, F141, and R144; these read DIG and TTTE.

The protein belongs to the IspF family. As to quaternary structure, homotrimer. It depends on a divalent metal cation as a cofactor.

It carries out the reaction 4-CDP-2-C-methyl-D-erythritol 2-phosphate = 2-C-methyl-D-erythritol 2,4-cyclic diphosphate + CMP. It functions in the pathway isoprenoid biosynthesis; isopentenyl diphosphate biosynthesis via DXP pathway; isopentenyl diphosphate from 1-deoxy-D-xylulose 5-phosphate: step 4/6. Involved in the biosynthesis of isopentenyl diphosphate (IPP) and dimethylallyl diphosphate (DMAPP), two major building blocks of isoprenoid compounds. Catalyzes the conversion of 4-diphosphocytidyl-2-C-methyl-D-erythritol 2-phosphate (CDP-ME2P) to 2-C-methyl-D-erythritol 2,4-cyclodiphosphate (ME-CPP) with a corresponding release of cytidine 5-monophosphate (CMP). The sequence is that of 2-C-methyl-D-erythritol 2,4-cyclodiphosphate synthase from Parabacteroides distasonis (strain ATCC 8503 / DSM 20701 / CIP 104284 / JCM 5825 / NCTC 11152).